The primary structure comprises 326 residues: Beta-ketoacyl-[acyl-carrier-protein] synthase III (326 aa).

Catalysis depends on residues Cys115 and His253. The ACP-binding stretch occupies residues 254 to 258; that stretch reads QANKR. Asn283 is a catalytic residue.

Belongs to the thiolase-like superfamily. FabH family. In terms of assembly, homodimer.

It localises to the cytoplasm. It catalyses the reaction malonyl-[ACP] + acetyl-CoA + H(+) = 3-oxobutanoyl-[ACP] + CO2 + CoA. The protein operates within lipid metabolism; fatty acid biosynthesis. Its function is as follows. Catalyzes the condensation reaction of fatty acid synthesis by the addition to an acyl acceptor of two carbons from malonyl-ACP. Catalyzes the first condensation reaction which initiates fatty acid synthesis and may therefore play a role in governing the total rate of fatty acid production. Possesses both acetoacetyl-ACP synthase and acetyl transacylase activities. Its substrate specificity determines the biosynthesis of branched-chain and/or straight-chain of fatty acids. The sequence is that of Beta-ketoacyl-[acyl-carrier-protein] synthase III from Bradyrhizobium diazoefficiens (strain JCM 10833 / BCRC 13528 / IAM 13628 / NBRC 14792 / USDA 110).